The following is a 156-amino-acid chain: Endogenous retrovirus group K member 25 Pro protein (156 aa).

The 76-residue stretch at 21–96 folds into the Peptidase A2 domain; sequence FEGLVDTGAD…IPLNLWGRDL (76 aa). The active site involves D26. The G-patch domain occupies 111–156; sequence YSPTSQKIMTKMGYIPGKGLGKNEDGIKIPVEAKINQKREGIGYPF.

It belongs to the peptidase A2 family. HERV class-II K(HML-2) subfamily. Active as a homodimer. In terms of processing, autoproteolytically processed at the N-terminus. Expected C-terminal autoprocessing not detected. The sequence shown is that of the processed Pro protein.

It carries out the reaction Processing at the authentic HIV-1 PR recognition site and release of the mature p17 matrix and the p24 capsid protein, as a result of the cleavage of the -SQNY-|-PIVQ- cleavage site.. In terms of biological role, retroviral proteases have roles in processing of the primary translation products and the maturation of the viral particle. Endogenous Pro proteins may have kept, lost or modified their original function during evolution. This endogenous protein has retained most of the characteristics of retroviral proteases. This chain is Endogenous retrovirus group K member 25 Pro protein (ERVK-25), found in Homo sapiens (Human).